The primary structure comprises 165 residues: Nucleotide-binding protein Pro_0479 (165 aa).

The protein belongs to the YajQ family.

In terms of biological role, nucleotide-binding protein. This Prochlorococcus marinus (strain SARG / CCMP1375 / SS120) protein is Nucleotide-binding protein Pro_0479.